Here is a 138-residue protein sequence, read N- to C-terminus: Thyrotropin subunit beta (138 aa).

The N-terminal stretch at 1-20 is a signal peptide; sequence MTATFLMSMIFGLACGQAMS. Cystine bridges form between Cys22/Cys72, Cys36/Cys87, Cys39/Cys125, Cys47/Cys103, Cys51/Cys105, and Cys108/Cys115. Residue Asn43 is glycosylated (N-linked (GlcNAc...) asparagine). Residues 133–138 constitute a propeptide that is removed on maturation; sequence MVGFSI.

Belongs to the glycoprotein hormones subunit beta family. As to quaternary structure, heterodimer of a common alpha chain and a unique beta chain which confers biological specificity to thyrotropin, lutropin, follitropin and gonadotropin.

It localises to the secreted. Its function is as follows. Indispensable for the control of thyroid structure and metabolism. The chain is Thyrotropin subunit beta (TSHB) from Bos taurus (Bovine).